Consider the following 477-residue polypeptide: FAD-dependent monooxygenase paxM (477 aa).

A helical transmembrane segment spans residues 4–24 (AEFQVIIVGGSIGGLTLAHCL). FAD-binding residues include glutamate 35, glycine 49, and arginine 108. Arginine 195 is a catalytic residue. Positions 308 and 321 each coordinate FAD. A helical transmembrane segment spans residues 446-466 (LMIYLFGLTIVYTSLTMMFDL).

Belongs to the paxM FAD-dependent monooxygenase family. Requires FAD as cofactor.

The protein resides in the membrane. Its pathway is secondary metabolite biosynthesis. In terms of biological role, FAD-dependent monooxygenase; part of the gene cluster that mediates the biosynthesis of paxilline, a mycotoxin that acts as an inhibitor of mammalian maxi-K channels. PaxG, the geranylgeranyl diphosphate (GGPP) synthase is proposed to catalyze the first step in paxilline biosynthesis. Condensation of indole-3-glycerol phosphate with GGPP by paxC then forms 3-geranylgeranylindole (3-GGI), followed by epoxidation and cyclization of this intermediate (by paxM and paxB) to form paspaline. Paspaline is subsequently converted to 13-desoxypaxilline by paxP, the latter being then converted to paxilline by paxQ. Finally paxilline can be mono- and di-prenylated by paxD. This is FAD-dependent monooxygenase paxM from Penicillium paxilli.